A 750-amino-acid polypeptide reads, in one-letter code: Photosystem I P700 chlorophyll a apoprotein A1 (750 aa).

Helical transmembrane passes span 70-93 (VFSA…FHGA), 156-179 (LYCT…FHYH), 195-219 (LNHH…HVSL), 291-309 (IAHH…GHMY), 346-369 (WHAQ…HHMY), 385-411 (LSLF…IFMV), 433-455 (AIIS…LYIH), and 531-549 (FLVH…LILL). [4Fe-4S] cluster-binding residues include C573 and C582. 2 helical membrane-spanning segments follow: residues 589–610 (HVFL…HFSW) and 664–686 (LSAY…MFLF). H675 is a binding site for chlorophyll a'. Residues M683 and Y691 each coordinate chlorophyll a. Phylloquinone is bound at residue W692. Residues 724-744 (AVGVTHYLLGGIATTWAFFLA) traverse the membrane as a helical segment.

It belongs to the PsaA/PsaB family. As to quaternary structure, the PsaA/B heterodimer binds the P700 chlorophyll special pair and subsequent electron acceptors. PSI consists of a core antenna complex that captures photons, and an electron transfer chain that converts photonic excitation into a charge separation. The eukaryotic PSI reaction center is composed of at least 11 subunits. Requires P700 is a chlorophyll a/chlorophyll a' dimer, A0 is one or more chlorophyll a, A1 is one or both phylloquinones and FX is a shared 4Fe-4S iron-sulfur center. as cofactor.

It localises to the plastid. The protein resides in the chloroplast thylakoid membrane. The enzyme catalyses reduced [plastocyanin] + hnu + oxidized [2Fe-2S]-[ferredoxin] = oxidized [plastocyanin] + reduced [2Fe-2S]-[ferredoxin]. Its function is as follows. PsaA and PsaB bind P700, the primary electron donor of photosystem I (PSI), as well as the electron acceptors A0, A1 and FX. PSI is a plastocyanin-ferredoxin oxidoreductase, converting photonic excitation into a charge separation, which transfers an electron from the donor P700 chlorophyll pair to the spectroscopically characterized acceptors A0, A1, FX, FA and FB in turn. Oxidized P700 is reduced on the lumenal side of the thylakoid membrane by plastocyanin. In Vitis vinifera (Grape), this protein is Photosystem I P700 chlorophyll a apoprotein A1.